We begin with the raw amino-acid sequence, 149 residues long: Arginine regulator (149 aa).

The protein belongs to the ArgR family.

Its subcellular location is the cytoplasm. It participates in amino-acid degradation; L-arginine degradation via ADI pathway. Regulates the transcription of the arc operon, involved in arginine catabolism. The chain is Arginine regulator (argR1) from Bacillus thuringiensis subsp. konkukian (strain 97-27).